The primary structure comprises 900 residues: Alanine--tRNA ligase (900 aa).

His-604, His-608, Cys-708, and His-712 together coordinate Zn(2+).

The protein belongs to the class-II aminoacyl-tRNA synthetase family. Requires Zn(2+) as cofactor.

It is found in the cytoplasm. The catalysed reaction is tRNA(Ala) + L-alanine + ATP = L-alanyl-tRNA(Ala) + AMP + diphosphate. Catalyzes the attachment of alanine to tRNA(Ala) in a two-step reaction: alanine is first activated by ATP to form Ala-AMP and then transferred to the acceptor end of tRNA(Ala). Also edits incorrectly charged Ser-tRNA(Ala) and Gly-tRNA(Ala) via its editing domain. The sequence is that of Alanine--tRNA ligase from Saccharolobus islandicus (strain M.14.25 / Kamchatka #1) (Sulfolobus islandicus).